Reading from the N-terminus, the 460-residue chain is Arginine biosynthesis bifunctional protein ArgJ, chloroplastic (460 aa).

The transit peptide at 1-26 (MYLSVPHYPSLKFTAFQSHKRNFRVF) directs the protein to the chloroplast. Substrate contacts are provided by Thr202, Lys228, Thr239, Glu328, Asn455, and Thr460. Residue Thr239 is the Nucleophile of the active site.

This sequence belongs to the ArgJ family. Heterodimer of an alpha and a beta chain.

The protein resides in the plastid. Its subcellular location is the chloroplast. The catalysed reaction is N(2)-acetyl-L-ornithine + L-glutamate = N-acetyl-L-glutamate + L-ornithine. It catalyses the reaction L-glutamate + acetyl-CoA = N-acetyl-L-glutamate + CoA + H(+). It participates in amino-acid biosynthesis; L-arginine biosynthesis; L-ornithine and N-acetyl-L-glutamate from L-glutamate and N(2)-acetyl-L-ornithine (cyclic): step 1/1. It functions in the pathway amino-acid biosynthesis; L-arginine biosynthesis; N(2)-acetyl-L-ornithine from L-glutamate: step 1/4. Its function is as follows. Catalyzes two activities which are involved in the cyclic version of arginine biosynthesis: the synthesis of acetylglutamate from glutamate and acetyl-CoA, and of ornithine by transacetylation between acetylornithine and glutamate. The sequence is that of Arginine biosynthesis bifunctional protein ArgJ, chloroplastic from Citrullus lanatus (Watermelon).